The sequence spans 606 residues: V-type proton ATPase catalytic subunit A (606 aa).

Position 2 is an N-acetylalanine (alanine 2). An ATP-binding site is contributed by 240–247 (AFGCGKTV).

The protein belongs to the ATPase alpha/beta chains family. In terms of assembly, V-ATPase is a heteromultimeric enzyme made up of two complexes: the ATP-hydrolytic V1 complex and the proton translocation V0 complex. The V1 complex consists of three catalytic AB heterodimers that form a heterohexamer, three peripheral stalks each consisting of EG heterodimers, one central rotor including subunits D and F, and the regulatory subunits C and H. The proton translocation complex V0 consists of the proton transport subunit a, a ring of proteolipid subunits c9c'', rotary subunit d, subunits e and f, and the accessory subunits vah-19/Ac45 and vah-20/PRR. In terms of tissue distribution, expressed in proximal but not distal germ cells.

The enzyme catalyses ATP + H2O + 4 H(+)(in) = ADP + phosphate + 5 H(+)(out). Its activity is regulated as follows. ATP hydrolysis occurs at the interface between the nucleotide-binding domains of subunits A and B. ATP hydrolysis triggers a conformational change in the subunits D and F, which induces a shift of subunit d. The c-ring is subsequently rotated and results in a continuous proton translocation across the membrane. Functionally, catalytic subunit of the V1 complex of vacuolar(H+)-ATPase (V-ATPase), a multisubunit enzyme composed of a peripheral complex (V1) that hydrolyzes ATP and a membrane integral complex (V0) that translocates protons. V-ATPase is responsible for acidifying and maintaining the pH of intracellular compartments and in some cell types, is targeted to the plasma membrane, where it is responsible for acidifying the extracellular environment. Required along with other vacuolar ATPase components for the removal of protein aggregates which form in immature oocytes in the distal gonad. This removal occurs as the oocytes mature and move to the proximal gonad, is triggered by the introduction of sperm through mating and occurs before fertilization. The introduction of sperm triggers V-ATPase accumulation in proximal oocytes and induces lysosomal acidification which leads to engulfing of protein aggregates by lysosomes and subsequent clearance of the aggregates. Lysosomal acidification also leads to changes in mitochondrial morphology and function. Mitochondria in distal immature oocytes are fragmented, produce high levels of reactive oxygen species (ROS) and have high membrane potential, indicative of metabolic inactivity. In contrast, mitochondria in proximal mature oocytes are tubular with lower ROS levels and membrane potential, indicative of an active metabolic state required for aggregate mobilization before clearance. Involved in receptor-mediated endocytosis. This chain is V-type proton ATPase catalytic subunit A, found in Caenorhabditis elegans.